Consider the following 244-residue polypeptide: 14-3-3 protein beta/alpha-A (244 aa).

Met1 carries the post-translational modification N-acetylmethionine.

This sequence belongs to the 14-3-3 family. In terms of assembly, homodimer, and heterodimer with other family members.

Its subcellular location is the cytoplasm. Its function is as follows. Adapter protein implicated in the regulation of a large spectrum of both general and specialized signaling pathways. Binds to a large number of partners, usually by recognition of a phosphoserine or phosphothreonine motif. Binding generally results in the modulation of the activity of the binding partner. The chain is 14-3-3 protein beta/alpha-A (ywhab-a) from Xenopus laevis (African clawed frog).